The primary structure comprises 260 residues: CD40 ligand (260 aa).

Residues 1–22 (MIETYSQTAPRSVATGPPVSMK) are Cytoplasmic-facing. The chain crosses the membrane as a helical; Signal-anchor for type II membrane protein span at residues 23-46 (IFMYLLTVFLITQMIGSALFAVYL). Residues 47–260 (HRRLDKIEDE…GFTSFGLLKL (214 aa)) are Extracellular-facing. Residues 121–260 (IAAHVISEAS…GFTSFGLLKL (140 aa)) form the THD domain. Residues Cys177 and Cys217 are joined by a disulfide bond. N-linked (GlcNAc...) asparagine glycosylation is present at Asn239.

Belongs to the tumor necrosis factor family. Homotrimer. Interacts with CD28. CD40 ligand, soluble form: Exists as either a monomer or a homotrimer. Forms a ternary complex between CD40 and integrins for CD40-CD40LG signaling. Post-translationally, the soluble form derives from the membrane form by proteolytic processing.

It is found in the cell membrane. It localises to the cell surface. The protein resides in the secreted. Functionally, cytokine that acts as a ligand to CD40/TNFRSF5. Costimulates T-cell proliferation and cytokine production. Its cross-linking on T-cells generates a costimulatory signal which enhances the production of IL4 and IL10 in conjunction with the TCR/CD3 ligation and CD28 costimulation. Induces the activation of NF-kappa-B. Induces the activation of kinases MAPK8 and PAK2 in T-cells. Mediates B-cell proliferation in the absence of co-stimulus as well as IgE production in the presence of IL4. Involved in immunoglobulin class switching. In terms of biological role, acts as a ligand for integrins, specifically ITGA5:ITGB1 and ITGAV:ITGB3; both integrins and the CD40 receptor are required for activation of CD40-CD40LG signaling, which have cell-type dependent effects, such as B-cell activation, NF-kappa-B signaling and anti-apoptotic signaling. In Canis lupus familiaris (Dog), this protein is CD40 ligand (CD40LG).